We begin with the raw amino-acid sequence, 174 residues long: Chorismate pyruvate-lyase (174 aa).

Substrate-binding residues include methionine 36, arginine 78, leucine 116, and glutamate 157.

Belongs to the UbiC family. In terms of assembly, monomer.

It localises to the cytoplasm. It carries out the reaction chorismate = 4-hydroxybenzoate + pyruvate. It functions in the pathway cofactor biosynthesis; ubiquinone biosynthesis. Removes the pyruvyl group from chorismate, with concomitant aromatization of the ring, to provide 4-hydroxybenzoate (4HB) for the ubiquinone pathway. The chain is Chorismate pyruvate-lyase from Erwinia tasmaniensis (strain DSM 17950 / CFBP 7177 / CIP 109463 / NCPPB 4357 / Et1/99).